Consider the following 708-residue polypeptide: MLSTHHHQGNSSSSSSSSSPSQTIGGSDLSNISALPLPLPSIFTTAQNQMNPPILFPPTSSLLGGSSNTPSFLLPPSSIMSSNVFPSHDGQYPDMPNMVDQYQIHPNQNPHYNYQYQLMFMQQQAQQNQPPQQNQQQQHHQQQQQQPQHHQQMQQQQHHQQMQQQQQHHQQMQQQQHHQQMQHHQLQQHQHQHQQQQQQQQHQQQHHQQQQQQQQQHHQQQQHHQHSQPQQQHQHNQQQQHQHNQQQHQQQQNQIQMVPQQPQSLSNSGNNNNNNNNNNNSNNNNNNNNNNNSHQLNNLTLSQNNTSGSNTPSPSTKGKRKHHETSNSEKKDSSGQTIPKCTRCNEAASWKHDKRRWWCKECKKAFTPGITKMQQVPQQAQLQPLQNHNQIIPQLWDSQQNNSSQNTPPTQPQNNMNQINHQLLQQQHQQAQLQAHLNLTASNQQVPPQLQQQINGGLPNNNNSLITQNTLNSLSTSVSCPPCPLCRGISSWKHDKKRYFCKECKKPFTPVGAGLSPSSSPSSPKKKSNITPITTSSTSSSSSTPSIINNNNNNNANSSKNNTPKKQLSPPPSVLQSPSSSSISQSPLQLNYQTPTYSPNPSLPSIGGNLNSLANSIKPDGGILISGLSPPKSSSSLNNLNSFSNTGALLSSNGINLANLGNPLSQLNKKQKKRSDKDINDGGVQVLVSCVDTNVNNCSSIIPDGDSW.

Disordered stretches follow at residues M1–L29 and Q123–P339. 3 stretches are compositionally biased toward low complexity: residues S11–S21, Q123–Q219, and S227–T316. Residues E324–S333 show a composition bias toward basic and acidic residues. A run of 2 repeats spans residues P339–P368 and P481–P510. The interval V511 to P604 is disordered. The segment covering S516–L590 has biased composition (low complexity). Positions N591–N600 are enriched in polar residues.

The protein resides in the nucleus. Functionally, cAMP-responsive transcriptional activator regulating late gene expression. Essential component of the developmental switch between early and late development. Binds to a number of CA/GT-rich gene regulatory elements. This Dictyostelium discoideum (Social amoeba) protein is G-box-binding factor (gbfA).